We begin with the raw amino-acid sequence, 402 residues long: METLKTRNIQVEAIKQSPTASREVEIVERKGIGHPDSVADGIAEAVSRSLSKYYIKNYGRILHHNTDQVEVVGGQSDPRFGGGVVLEPSYILISGRATSTVNGERIPVKSIAIKAAKDYLREHFRDLEIDSDVMIDSRIGNGSIDLRGLYDTRKFKANDTSFGVGFAPFTDTETIVKATEKYINGDLKKSLPQIGYDIKVMGFRKNRTINLTVAAAYVDKYVKDPDEYYSVKEELVNKITDNALKYTNNDVQVFVNTGDIKDDKVYYLTVTGLSMENGDDGSVGRGNRVNGLITPYRPMSMEAAAGKNPVTHVGKLYNVLSNIIANDIVKEEGGDIKEVLVRIVSQIGRPVDEPHVASIQVIYEDNVDPSKHKNNITAIADDRIAHISDLTNMFVDGKLDVF.

ATP is bound at residue 140–145 (GNGSID).

The protein belongs to the AdoMet synthase 2 family. It depends on Mg(2+) as a cofactor.

It catalyses the reaction L-methionine + ATP + H2O = S-adenosyl-L-methionine + phosphate + diphosphate. The protein operates within amino-acid biosynthesis; S-adenosyl-L-methionine biosynthesis; S-adenosyl-L-methionine from L-methionine: step 1/1. Catalyzes the formation of S-adenosylmethionine from methionine and ATP. The chain is S-adenosylmethionine synthase from Picrophilus torridus (strain ATCC 700027 / DSM 9790 / JCM 10055 / NBRC 100828 / KAW 2/3).